A 365-amino-acid polypeptide reads, in one-letter code: Probable L-tyrosine/L-aspartate decarboxylase (365 aa).

The residue at position 224 (Lys-224) is an N6-(pyridoxal phosphate)lysine.

It belongs to the group II decarboxylase family. MfnA subfamily. Pyridoxal 5'-phosphate serves as cofactor.

It catalyses the reaction L-tyrosine + H(+) = tyramine + CO2. The catalysed reaction is L-aspartate + H(+) = beta-alanine + CO2. It functions in the pathway cofactor biosynthesis; methanofuran biosynthesis. The protein operates within cofactor biosynthesis; coenzyme A biosynthesis. Functionally, catalyzes the decarboxylation of L-tyrosine to produce tyramine for methanofuran biosynthesis. Can also catalyze the decarboxylation of L-aspartate to produce beta-alanine for coenzyme A (CoA) biosynthesis. The polypeptide is Probable L-tyrosine/L-aspartate decarboxylase (Methanoculleus marisnigri (strain ATCC 35101 / DSM 1498 / JR1)).